The following is a 483-amino-acid chain: Zinc metalloproteinase/disintegrin (483 aa).

The first 20 residues, 1–20, serve as a signal peptide directing secretion; that stretch reads MIQVLLVTVCLAVFPYQGSS. Residues 21–190 constitute a propeptide that is removed on maturation; sequence IILESGNVND…KASQLYLTPE (170 aa). The Peptidase M12B domain occupies 197-395; that stretch reads RYVKLAIVVD…YKPQCILNAP (199 aa). 3 disulfide bridges follow: Cys-308–Cys-390, Cys-352–Cys-374, and Cys-354–Cys-357. His-333 contributes to the Zn(2+) binding site. Glu-334 is an active-site residue. His-337 and His-343 together coordinate Zn(2+). A propeptide spanning residues 396–411 is cleaved from the precursor; it reads LRTDTVSTPVSGNELL. The region spanning 403–483 is the Disintegrin domain; that stretch reads TPVSGNELLE…SDDCPRWNDL (81 aa). 6 cysteine pairs are disulfide-bonded: Cys-417–Cys-432, Cys-419–Cys-427, Cys-426–Cys-449, Cys-440–Cys-446, Cys-445–Cys-470, and Cys-458–Cys-477. Positions 462-464 match the Cell attachment site motif; it reads RGD.

Belongs to the venom metalloproteinase (M12B) family. P-II subfamily. P-IIa sub-subfamily. In terms of assembly, monomer. The cofactor is Zn(2+). As to expression, expressed by the venom gland.

It is found in the secreted. Impairs hemostasis in the envenomed animal. Functionally, inhibits ADP- and collagen-induced human platelet aggregation with IC(50) of 123 and 135 nM, respectively. Inhibits sperm-egg binding in a concentration-dependent manner, but has no effect on the fusion of sperm-egg. This is Zinc metalloproteinase/disintegrin from Protobothrops jerdonii (Jerdon's pitviper).